A 386-amino-acid polypeptide reads, in one-letter code: Bifunctional enzyme IspD/IspF (386 aa).

The 2-C-methyl-D-erythritol 4-phosphate cytidylyltransferase stretch occupies residues 1-225 (MYNFVTLSIL…SCLSAPSSDT (225 aa)). The 2-C-methyl-D-erythritol 2,4-cyclodiphosphate synthase stretch occupies residues 226–386 (LSGVGFDVHA…NLKYFDWTKI (161 aa)). A divalent metal cation-binding residues include D232 and H234. 4-CDP-2-C-methyl-D-erythritol 2-phosphate-binding positions include 232–234 (DVH) and 258–259 (HS). Residue H266 participates in a divalent metal cation binding. 4-CDP-2-C-methyl-D-erythritol 2-phosphate is bound by residues 280–282 (DIG), 285–289 (FPDND), 356–359 (TTTE), F363, and R366.

In the N-terminal section; belongs to the IspD/TarI cytidylyltransferase family. IspD subfamily. It in the C-terminal section; belongs to the IspF family. It depends on a divalent metal cation as a cofactor.

It catalyses the reaction 2-C-methyl-D-erythritol 4-phosphate + CTP + H(+) = 4-CDP-2-C-methyl-D-erythritol + diphosphate. The enzyme catalyses 4-CDP-2-C-methyl-D-erythritol 2-phosphate = 2-C-methyl-D-erythritol 2,4-cyclic diphosphate + CMP. Its pathway is isoprenoid biosynthesis; isopentenyl diphosphate biosynthesis via DXP pathway; isopentenyl diphosphate from 1-deoxy-D-xylulose 5-phosphate: step 2/6. It participates in isoprenoid biosynthesis; isopentenyl diphosphate biosynthesis via DXP pathway; isopentenyl diphosphate from 1-deoxy-D-xylulose 5-phosphate: step 4/6. Functionally, bifunctional enzyme that catalyzes the formation of 4-diphosphocytidyl-2-C-methyl-D-erythritol from CTP and 2-C-methyl-D-erythritol 4-phosphate (MEP) (IspD), and catalyzes the conversion of 4-diphosphocytidyl-2-C-methyl-D-erythritol 2-phosphate (CDP-ME2P) to 2-C-methyl-D-erythritol 2,4-cyclodiphosphate (ME-CPP) with a corresponding release of cytidine 5-monophosphate (CMP) (IspF). This chain is Bifunctional enzyme IspD/IspF, found in Sulfurimonas denitrificans (strain ATCC 33889 / DSM 1251) (Thiomicrospira denitrificans (strain ATCC 33889 / DSM 1251)).